The chain runs to 140 residues: Large ribosomal subunit protein uL11 (140 aa).

This sequence belongs to the universal ribosomal protein uL11 family. In terms of assembly, part of the ribosomal stalk of the 50S ribosomal subunit. Interacts with L10 and the large rRNA to form the base of the stalk. L10 forms an elongated spine to which L12 dimers bind in a sequential fashion forming a multimeric L10(L12)X complex. In terms of processing, one or more lysine residues are methylated.

Forms part of the ribosomal stalk which helps the ribosome interact with GTP-bound translation factors. This chain is Large ribosomal subunit protein uL11, found in Pelobacter propionicus (strain DSM 2379 / NBRC 103807 / OttBd1).